A 33-amino-acid chain; its full sequence is Photosystem II reaction center protein T (33 aa).

Residues Ala-3–Phe-23 form a helical membrane-spanning segment.

This sequence belongs to the PsbT family. PSII is composed of 1 copy each of membrane proteins PsbA, PsbB, PsbC, PsbD, PsbE, PsbF, PsbH, PsbI, PsbJ, PsbK, PsbL, PsbM, PsbT, PsbY, PsbZ, Psb30/Ycf12, at least 3 peripheral proteins of the oxygen-evolving complex and a large number of cofactors. It forms dimeric complexes.

The protein resides in the plastid. Its subcellular location is the chloroplast thylakoid membrane. In terms of biological role, found at the monomer-monomer interface of the photosystem II (PS II) dimer, plays a role in assembly and dimerization of PSII. PSII is a light-driven water plastoquinone oxidoreductase, using light energy to abstract electrons from H(2)O, generating a proton gradient subsequently used for ATP formation. The polypeptide is Photosystem II reaction center protein T (Pelargonium hortorum (Common geranium)).